A 156-amino-acid chain; its full sequence is Small ribosomal subunit protein uS7 (156 aa).

The protein belongs to the universal ribosomal protein uS7 family. Part of the 30S ribosomal subunit. Contacts proteins S9 and S11.

Its function is as follows. One of the primary rRNA binding proteins, it binds directly to 16S rRNA where it nucleates assembly of the head domain of the 30S subunit. Is located at the subunit interface close to the decoding center, probably blocks exit of the E-site tRNA. The chain is Small ribosomal subunit protein uS7 from Shewanella halifaxensis (strain HAW-EB4).